A 156-amino-acid chain; its full sequence is Small ribosomal subunit protein uS7 (156 aa).

Belongs to the universal ribosomal protein uS7 family. In terms of assembly, part of the 30S ribosomal subunit. Contacts proteins S9 and S11.

In terms of biological role, one of the primary rRNA binding proteins, it binds directly to 16S rRNA where it nucleates assembly of the head domain of the 30S subunit. Is located at the subunit interface close to the decoding center, probably blocks exit of the E-site tRNA. This Ruminiclostridium cellulolyticum (strain ATCC 35319 / DSM 5812 / JCM 6584 / H10) (Clostridium cellulolyticum) protein is Small ribosomal subunit protein uS7.